A 271-amino-acid polypeptide reads, in one-letter code: Exosome complex component Rrp42 (271 aa).

It belongs to the RNase PH family. Rrp42 subfamily. In terms of assembly, component of the archaeal exosome complex. Forms a hexameric ring-like arrangement composed of 3 Rrp41-Rrp42 heterodimers. The hexameric ring associates with a trimer of Rrp4 and/or Csl4 subunits.

The protein localises to the cytoplasm. Its function is as follows. Non-catalytic component of the exosome, which is a complex involved in RNA degradation. Contributes to the structuring of the Rrp41 active site. In Methanothermobacter thermautotrophicus (strain ATCC 29096 / DSM 1053 / JCM 10044 / NBRC 100330 / Delta H) (Methanobacterium thermoautotrophicum), this protein is Exosome complex component Rrp42.